The sequence spans 451 residues: Phenolic glucoside malonyltransferase 2 (451 aa).

The Proton acceptor role is filled by H165. Positions 165–169 match the HXXXD motif motif; sequence HAVLD. Malonyl-CoA contacts are provided by residues H270 and 272–273; that span reads ST. Residue D395 is the Proton acceptor of the active site. Positions 395–399 match the DFGWG motif motif; the sequence is DFGWG.

It belongs to the plant acyltransferase family. Phenolic glucoside malonyltransferase subfamily.

The enzyme catalyses a flavonol 7-O-beta-D-glucoside + malonyl-CoA = a flavonol 7-O-(6-O-malonyl-beta-D-glucoside) + CoA. Functionally, malonyltransferase acting on xenobiotic glucosides. Has activity toward 2-Naphthol glucoside (2NAG), 1-Naphthol glucoside (1NAG), kaempferol 7-O-glucoside, hydroxycoumarin glucosides and phenol-glucosides, but not toward kaempferol 3-O-glucoside or daidzin. Prefers phenol glucosides rather than naphtol glucosides. In vivo, seems to be involved in the malonylation of 4-methylumbelliferone glucoside or 4-nitrophenyl glucoside while PMAT1 would be involved in the malonylation of 2-Naphthol glucoside. This chain is Phenolic glucoside malonyltransferase 2 (PMAT2), found in Arabidopsis thaliana (Mouse-ear cress).